Reading from the N-terminus, the 131-residue chain is Small ribosomal subunit protein uS12c (131 aa).

It belongs to the universal ribosomal protein uS12 family. In terms of assembly, part of the 30S ribosomal subunit.

Its subcellular location is the plastid. It localises to the chloroplast. Its function is as follows. With S4 and S5 plays an important role in translational accuracy. Located at the interface of the 30S and 50S subunits. This is Small ribosomal subunit protein uS12c (rps12) from Stigeoclonium helveticum (Green alga).